The primary structure comprises 660 residues: DNA mismatch repair protein MutL (660 aa).

The protein belongs to the DNA mismatch repair MutL/HexB family.

Functionally, this protein is involved in the repair of mismatches in DNA. It is required for dam-dependent methyl-directed DNA mismatch repair. May act as a 'molecular matchmaker', a protein that promotes the formation of a stable complex between two or more DNA-binding proteins in an ATP-dependent manner without itself being part of a final effector complex. In Streptococcus equi subsp. zooepidemicus (strain MGCS10565), this protein is DNA mismatch repair protein MutL.